We begin with the raw amino-acid sequence, 33 residues long: Mu/omega-theraphotoxin-Tap2a (33 aa).

Cystine bridges form between C2-C17, C9-C22, and C16-C29.

The protein belongs to the neurotoxin 10 (Hwtx-1) family. 59 (Tltx) subfamily. Expressed by the venom gland.

The protein resides in the secreted. Functionally, gating-modifier toxin that inhibits both sodium (Nav) and calcium (Cav3) channels by inducing hyperpolarizing shift in voltage-dependence of activation and steady state inactivation. Inhibits Nav1.1/SCN1A, Nav1.2/SCN2A, Nav1.6/SCN6A, Nav1.7/SCN9A and Cav3.1/CACNA1G sodium and calcium channels at nanomolar concentrations (IC(50)=169-621 nM). Surprisingly, selectively slows fast inactivation of Nav1.3/SCN3A. Also shows moderate inhibition of Nav1.3/SCN3A sodium channels (IC(50)=1216 nM). This Theraphosa apophysis (Goliath pinkfoot tarantula) protein is Mu/omega-theraphotoxin-Tap2a.